Here is a 292-residue protein sequence, read N- to C-terminus: NAD kinase (292 aa).

Asp-72 acts as the Proton acceptor in catalysis. NAD(+)-binding positions include 72–73 (DG), 146–147 (NE), His-157, Arg-174, Asp-176, and 187–192 (TAYSLS).

Belongs to the NAD kinase family. Requires a divalent metal cation as cofactor.

It is found in the cytoplasm. It catalyses the reaction NAD(+) + ATP = ADP + NADP(+) + H(+). Its function is as follows. Involved in the regulation of the intracellular balance of NAD and NADP, and is a key enzyme in the biosynthesis of NADP. Catalyzes specifically the phosphorylation on 2'-hydroxyl of the adenosine moiety of NAD to yield NADP. The chain is NAD kinase from Shewanella woodyi (strain ATCC 51908 / MS32).